Here is a 785-residue protein sequence, read N- to C-terminus: Hypha-specific G1 cyclin-related protein 1 (785 aa).

Residues 1–42 (MINITKPLTPKSISQQKQQQQHPYKNISTTKSNNNPQASGSK) form a disordered region. Residues 22–42 (HPYKNISTTKSNNNPQASGSK) show a composition bias toward polar residues. In terms of domain architecture, Cyclin N-terminal spans 71–238 (DIYDIMVNLI…VLNTLEWSLN (168 aa)). 3 disordered regions span residues 408–433 (TTTT…TTPV), 447–679 (VSST…SKFN), and 750–774 (NNSG…DSPI). Low complexity-rich tracts occupy residues 447–473 (VSST…STTP) and 484–512 (NYSN…NNTT). Polar residues predominate over residues 513–535 (ISPVDSTTINSHTKNSSQLNYQY). A compositionally biased stretch (low complexity) spans 579–613 (NSANKNSNKSNSANNNNTTTIATTTTTTTNNNNNS). Residues 621–631 (LSYNNYFNSPN) are compositionally biased toward polar residues. The segment covering 646 to 679 (QQQQQNQGQNQQQPLQLYQGDNNNNGTNTNSKFN) has biased composition (low complexity). Over residues 754–764 (NGKGNGNGGSG) the composition is skewed to gly residues. Polar residues predominate over residues 765-774 (TPISENDSPI).

This sequence belongs to the cyclin family. Interacts with CDC28.

Hypha-specific G1 cyclin-related protein involved in regulation of morphogenesis and opaque cells filamentous growth, and required for both conventional and pheromone-stimulated biofilm formation. Required to maintain hyphal tip localization of actin and SPA2. Regulates the CDC28 kinase during hyphal growth. The CDC28-HGC1 complex phosphorylates and prevents RGA2 from localizing to hyphal tips, leading to localized CDC42 activation for hyphal extension. The CDC28-HGC1 complex also phosphorylates SEC2 and maintains CDC11 phosphorylation throughout hyphal growth. Moreover CDC28-HGC1 phosphorylation of EFG1 represses cell separation genes during hyphal growth. Also partially controls SEP7 phosphorylation status and subsequent septin ring dynamics. Required for virulence and especially mediates dynamic adhesion to endothelium of blood vessels during circulation. This is Hypha-specific G1 cyclin-related protein 1 (HGC1) from Candida albicans (strain SC5314 / ATCC MYA-2876) (Yeast).